The sequence spans 216 residues: NADH-quinone oxidoreductase subunit C (216 aa).

This sequence belongs to the complex I 30 kDa subunit family. NDH-1 is composed of 14 different subunits. Subunits NuoB, C, D, E, F, and G constitute the peripheral sector of the complex.

It is found in the cell inner membrane. The enzyme catalyses a quinone + NADH + 5 H(+)(in) = a quinol + NAD(+) + 4 H(+)(out). In terms of biological role, NDH-1 shuttles electrons from NADH, via FMN and iron-sulfur (Fe-S) centers, to quinones in the respiratory chain. The immediate electron acceptor for the enzyme in this species is believed to be ubiquinone. Couples the redox reaction to proton translocation (for every two electrons transferred, four hydrogen ions are translocated across the cytoplasmic membrane), and thus conserves the redox energy in a proton gradient. The chain is NADH-quinone oxidoreductase subunit C from Francisella tularensis subsp. holarctica (strain FTNF002-00 / FTA).